A 359-amino-acid polypeptide reads, in one-letter code: Probable tyrosine-protein phosphatase pir-2 (359 aa).

The region spanning 16–191 (QPVGNVIPRT…AKDKRDKQVD (176 aa)) is the Tyrosine-protein phosphatase domain. The active-site Phosphocysteine intermediate is C131. Positions 184–199 (DKRDKQVDSDSDSSER) are enriched in basic and acidic residues. 3 disordered regions span residues 184-211 (DKRD…KHRE), 234-259 (SVSG…PHHW), and 274-328 (PVAN…RNRM). Residues 200 to 210 (QRKKKNKRKHR) show a composition bias toward basic residues. Over residues 234–246 (SVSGTDYQNSPNG) the composition is skewed to polar residues. Positions 290–309 (PQEEEEFEEDFEEIEEETET) are enriched in acidic residues. Basic residues predominate over residues 319–328 (SKRRARRNRM).

Belongs to the protein-tyrosine phosphatase family. Non-receptor class CDC14 subfamily.

The catalysed reaction is O-phospho-L-tyrosyl-[protein] + H2O = L-tyrosyl-[protein] + phosphate. The polypeptide is Probable tyrosine-protein phosphatase pir-2 (Caenorhabditis elegans).